The sequence spans 548 residues: Mannosyltransferase APTG1 (548 aa).

The disordered stretch occupies residues 1–23; the sequence is MDIRKRKNAGGDGDGGADGASVN. 3 consecutive transmembrane segments (helical) span residues 41–61, 98–118, and 146–166; these read IFLF…TYFN, LFAF…YIMI, and GNVA…FFCL. An N-linked (GlcNAc...) asparagine glycan is attached at N167. Transmembrane regions (helical) follow at residues 169 to 189, 204 to 224, 238 to 258, 260 to 280, 294 to 314, 320 to 340, and 342 to 362; these read TFSN…WPCI, LVIA…WLYV, FIIL…CLLD, LMYG…FLSS, FTQG…AGII, KLSA…HKEF, and FVLP…AQME. N382 carries N-linked (GlcNAc...) asparagine glycosylation. Residues 392–412 form a helical membrane-spanning segment; it reads LSVYFLLATNIPMALYMSLFH. An N-linked (GlcNAc...) asparagine glycan is attached at N490.

This sequence belongs to the glycosyltransferase 22 family. Mostly expressed, mainly in vascular tissues, in leaves, roots, stems, flowers, siliques and pollen, and, to a lower extent, in seedlings.

It is found in the endoplasmic reticulum membrane. Mannosyltransferase involved in glycosylphosphatidylinositol-anchor biosynthesis. Required for the pollen tube micropylar guidance and embryo development by regulating GPI-anchor mediated protein localization (e.g. COBL10 and A36). The sequence is that of Mannosyltransferase APTG1 from Arabidopsis thaliana (Mouse-ear cress).